The sequence spans 433 residues: Pectinesterase B (433 aa).

An N-terminal signal peptide occupies residues 1-21 (MSLTHYSGLAAAVSMSLILTA). C22 is lipidated: N-palmitoyl cysteine. A lipid anchor (S-diacylglycerol cysteine) is attached at C22. The Periplasmic portion of the chain corresponds to 22-433 (CGGQTPNSAR…EYNTQVLLHE (412 aa)). T202 and Q236 together coordinate substrate. D259 (proton donor) is an active-site residue. D292 functions as the Nucleophile in the catalytic mechanism. The substrate site is built by R356 and W358.

It belongs to the pectinesterase family.

It is found in the cell outer membrane. The catalysed reaction is [(1-&gt;4)-alpha-D-galacturonosyl methyl ester](n) + n H2O = [(1-&gt;4)-alpha-D-galacturonosyl](n) + n methanol + n H(+). It participates in glycan metabolism; pectin degradation; 2-dehydro-3-deoxy-D-gluconate from pectin: step 1/5. Probably involved in the degradation of methylated oligogalacturonides present in the periplasm. More active on methylated oligogalacturides than on pectin. The polypeptide is Pectinesterase B (Dickeya dadantii (strain 3937) (Erwinia chrysanthemi (strain 3937))).